A 198-amino-acid polypeptide reads, in one-letter code: Adenylate kinase (198 aa).

Residue 10–15 participates in ATP binding; the sequence is GAGKGT. The interval 30 to 59 is NMP; it reads STGDMLRAAVQAGSEVGKRAKAVMDAGELV. AMP is bound by residues Thr31, Arg36, 57-59, 85-88, and Gln92; these read ELV and GYPR. Positions 126–142 are LID; it reads KRAEDAKAAGQPVRKDD. Position 127 (Arg127) interacts with ATP. The AMP site is built by Arg139 and Arg150. Ala178 contributes to the ATP binding site.

Belongs to the adenylate kinase family. Monomer.

It is found in the cytoplasm. It catalyses the reaction AMP + ATP = 2 ADP. The protein operates within purine metabolism; AMP biosynthesis via salvage pathway; AMP from ADP: step 1/1. Catalyzes the reversible transfer of the terminal phosphate group between ATP and AMP. Plays an important role in cellular energy homeostasis and in adenine nucleotide metabolism. The chain is Adenylate kinase from Mesorhizobium japonicum (strain LMG 29417 / CECT 9101 / MAFF 303099) (Mesorhizobium loti (strain MAFF 303099)).